A 1383-amino-acid polypeptide reads, in one-letter code: NPC intracellular cholesterol transporter 1 homolog 1 (1383 aa).

The first 20 residues, 1–20 (MKQLLIFCLLFGSIFHHGDA), serve as a signal peptide directing secretion. 8 cysteine pairs are disulfide-bonded: Cys22–Cys76, Cys28–Cys39, Cys65–Cys111, Cys77–Cys115, Cys99–Cys246, Cys102–Cys167, Cys182–Cys187, and Cys235–Cys251. Asn42 is a glycosylation site (N-linked (GlcNAc...) asparagine). Asn231 carries N-linked (GlcNAc...) asparagine glycosylation. The next 2 membrane-spanning stretches (helical) occupy residues 282–302 (IFVM…GFVF) and 353–373 (PKSH…GMIY). N-linked (GlcNAc...) asparagine glycosylation is present at Asn447. 2 cysteine pairs are disulfide-bonded: Cys464–Cys474 and Cys526–Cys541. N-linked (GlcNAc...) asparagine glycosylation occurs at Asn558. Helical transmembrane passes span 627–647 (EIVT…FSLG), 665–685 (ICLG…SWGI), 697–717 (ALVV…FMVV), 746–766 (TMPA…IGGF), 780–800 (GLAV…LFVW), and 856–876 (IITG…SSKI). The SSD domain occupies 627-800 (EIVTVVIALA…CTIFLALFVW (174 aa)). 4 disulfides stabilise this stretch: Cys929–Cys934, Cys976–Cys1046, Cys977–Cys1005, and Cys988–Cys1002. Asn993 and Asn1082 each carry an N-linked (GlcNAc...) asparagine glycan. Helical transmembrane passes span 1126-1146 (IMPI…GIIC), 1157-1177 (ACAV…MYIF), 1179-1199 (IPVN…LIEF), 1226-1246 (IGPI…MFLS), and 1260-1280 (LFLI…PILL).

It belongs to the patched family.

It localises to the membrane. The catalysed reaction is cholesterol(in) = cholesterol(out). Functionally, involved in the uptake or utilization of cholesterol. Ncr-1 and ncr-2 act redundantly to prevent dauer larva formation under favorable growth conditions, and are required for the normal functioning of ADF, ASI and ASG neurons. This chain is NPC intracellular cholesterol transporter 1 homolog 1, found in Caenorhabditis elegans.